The sequence spans 262 residues: Large ribosomal subunit protein bL9m (262 aa).

Residues 1–49 (MAASMAPRCSSLLWAGAAWLRQRGIGELLQPRIERSTPGRDFSLSHYQS) constitute a mitochondrion transit peptide.

The protein belongs to the bacterial ribosomal protein bL9 family. Component of the mitochondrial ribosome large subunit (39S) which comprises a 16S rRNA and about 50 distinct proteins.

The protein resides in the mitochondrion. This is Large ribosomal subunit protein bL9m (Mrpl9) from Rattus norvegicus (Rat).